Here is a 101-residue protein sequence, read N- to C-terminus: Apolipoprotein C-II (101 aa).

The N-terminal stretch at 1 to 22 is a signal peptide; the sequence is MGIRYLLVLVLVLLVLGCEVQG. The interval 66-74 is lipid binding; sequence TVDEKIREI. The interval 78–101 is lipoprotein lipase cofactor; it reads STAAVSTYAGIFTDQLLSMLKGDQ.

This sequence belongs to the apolipoprotein C2 family. Proapolipoprotein C-II is synthesized as a sialic acid containing glycoprotein which is subsequently desialylated prior to its proteolytic processing. In terms of processing, proapolipoprotein C-II, the major form found in plasma undergoes proteolytic cleavage of its N-terminal hexapeptide to generate apolipoprotein C-II, which occurs as the minor form in plasma.

It localises to the secreted. In terms of biological role, component of chylomicrons, very low-density lipoproteins (VLDL), low-density lipoproteins (LDL), and high-density lipoproteins (HDL) in plasma. Plays an important role in lipoprotein metabolism as an activator of lipoprotein lipase. Both proapolipoprotein C-II and apolipoprotein C-II can activate lipoprotein lipase. This chain is Apolipoprotein C-II (APOC2), found in Mirounga angustirostris (Northern elephant seal).